We begin with the raw amino-acid sequence, 181 residues long: Transcription factor bHLH167 (181 aa).

The disordered stretch occupies residues Met1–Arg22. The bHLH domain occupies Ser14–Leu63.

The protein belongs to the bHLH protein family.

The protein resides in the nucleus. This chain is Transcription factor bHLH167, found in Arabidopsis thaliana (Mouse-ear cress).